The sequence spans 433 residues: Dihydroorotase (433 aa).

Zn(2+) contacts are provided by His-63 and His-65. Residues 65–67 and Asn-97 each bind substrate; that span reads HLR. 3 residues coordinate Zn(2+): Asp-155, His-182, and His-235. Asn-283 is a binding site for substrate. Residue Asp-310 coordinates Zn(2+). The active site involves Asp-310. His-314 contributes to the substrate binding site.

This sequence belongs to the metallo-dependent hydrolases superfamily. DHOase family. Class I DHOase subfamily. Requires Zn(2+) as cofactor.

It carries out the reaction (S)-dihydroorotate + H2O = N-carbamoyl-L-aspartate + H(+). It functions in the pathway pyrimidine metabolism; UMP biosynthesis via de novo pathway; (S)-dihydroorotate from bicarbonate: step 3/3. Its function is as follows. Catalyzes the reversible cyclization of carbamoyl aspartate to dihydroorotate. This Anaeromyxobacter dehalogenans (strain 2CP-C) protein is Dihydroorotase.